Consider the following 341-residue polypeptide: tRNA N6-adenosine threonylcarbamoyltransferase (341 aa).

Histidine 111 and histidine 115 together coordinate Fe cation. Residues 134 to 138 (LVSGG), aspartate 167, glycine 180, and asparagine 276 each bind substrate. Aspartate 304 contacts Fe cation.

It belongs to the KAE1 / TsaD family. The cofactor is Fe(2+).

Its subcellular location is the cytoplasm. It carries out the reaction L-threonylcarbamoyladenylate + adenosine(37) in tRNA = N(6)-L-threonylcarbamoyladenosine(37) in tRNA + AMP + H(+). Functionally, required for the formation of a threonylcarbamoyl group on adenosine at position 37 (t(6)A37) in tRNAs that read codons beginning with adenine. Is involved in the transfer of the threonylcarbamoyl moiety of threonylcarbamoyl-AMP (TC-AMP) to the N6 group of A37, together with TsaE and TsaB. TsaD likely plays a direct catalytic role in this reaction. This chain is tRNA N6-adenosine threonylcarbamoyltransferase, found in Pseudomonas fluorescens (strain Pf0-1).